A 435-amino-acid polypeptide reads, in one-letter code: Transmembrane protein 130 (435 aa).

An N-terminal signal peptide occupies residues 1 to 24 (MAQAVWSRLGRILWLACLLPWAPA). Residues 25 to 339 (GVAAGLYELN…IQVWPSRIQP (315 aa)) are Extracellular-facing. N-linked (GlcNAc...) asparagine glycosylation is found at Asn-34, Asn-197, and Asn-300. Residues 147-233 (WPSSYLTKTV…AVKQKTGDFS (87 aa)) enclose the PKD domain. The chain crosses the membrane as a helical span at residues 340-360 (AVFAFPCATLITVMLAFIMYM). The Cytoplasmic segment spans residues 361-435 (TLRNATQQKD…LYKSVKTYTV (75 aa)).

Its subcellular location is the golgi apparatus membrane. This is Transmembrane protein 130 (TMEM130) from Homo sapiens (Human).